The chain runs to 401 residues: Dual-specificity RNA methyltransferase RlmN (401 aa).

Catalysis depends on Glu-114, which acts as the Proton acceptor. The region spanning Asp-120–Asp-365 is the Radical SAM core domain. Cysteines 127 and 370 form a disulfide. [4Fe-4S] cluster is bound by residues Cys-134, Cys-138, and Cys-141. S-adenosyl-L-methionine-binding positions include Gly-187–Glu-188, Ser-219, Ser-241–His-243, and Asn-327. Catalysis depends on Cys-370, which acts as the S-methylcysteine intermediate.

The protein belongs to the radical SAM superfamily. RlmN family. Requires [4Fe-4S] cluster as cofactor.

Its subcellular location is the cytoplasm. It catalyses the reaction adenosine(2503) in 23S rRNA + 2 reduced [2Fe-2S]-[ferredoxin] + 2 S-adenosyl-L-methionine = 2-methyladenosine(2503) in 23S rRNA + 5'-deoxyadenosine + L-methionine + 2 oxidized [2Fe-2S]-[ferredoxin] + S-adenosyl-L-homocysteine. It carries out the reaction adenosine(37) in tRNA + 2 reduced [2Fe-2S]-[ferredoxin] + 2 S-adenosyl-L-methionine = 2-methyladenosine(37) in tRNA + 5'-deoxyadenosine + L-methionine + 2 oxidized [2Fe-2S]-[ferredoxin] + S-adenosyl-L-homocysteine. Functionally, specifically methylates position 2 of adenine 2503 in 23S rRNA and position 2 of adenine 37 in tRNAs. m2A2503 modification seems to play a crucial role in the proofreading step occurring at the peptidyl transferase center and thus would serve to optimize ribosomal fidelity. This Stenotrophomonas maltophilia (strain R551-3) protein is Dual-specificity RNA methyltransferase RlmN.